The sequence spans 121 residues: Large ribosomal subunit protein bL20 (121 aa).

It belongs to the bacterial ribosomal protein bL20 family.

In terms of biological role, binds directly to 23S ribosomal RNA and is necessary for the in vitro assembly process of the 50S ribosomal subunit. It is not involved in the protein synthesizing functions of that subunit. This Moorella thermoacetica (strain ATCC 39073 / JCM 9320) protein is Large ribosomal subunit protein bL20.